The following is a 152-amino-acid chain: Transcriptional regulator MraZ (152 aa).

SpoVT-AbrB domains are found at residues 5–52 and 81–124; these read ASAI…PIHE and AHEV…DEQS.

The protein belongs to the MraZ family. In terms of assembly, forms oligomers.

It localises to the cytoplasm. The protein localises to the nucleoid. The chain is Transcriptional regulator MraZ from Shewanella baltica (strain OS155 / ATCC BAA-1091).